Here is a 187-residue protein sequence, read N- to C-terminus: Peptide deformylase 2 (187 aa).

Residues cysteine 107 and histidine 149 each coordinate Fe cation. The active site involves glutamate 150. Histidine 153 is a binding site for Fe cation.

It belongs to the polypeptide deformylase family. Fe(2+) serves as cofactor.

The catalysed reaction is N-terminal N-formyl-L-methionyl-[peptide] + H2O = N-terminal L-methionyl-[peptide] + formate. In terms of biological role, removes the formyl group from the N-terminal Met of newly synthesized proteins. Requires at least a dipeptide for an efficient rate of reaction. N-terminal L-methionine is a prerequisite for activity but the enzyme has broad specificity at other positions. This Gloeobacter violaceus (strain ATCC 29082 / PCC 7421) protein is Peptide deformylase 2.